The sequence spans 412 residues: Histone-lysine N-methyltransferase SUV39H1 (412 aa).

Residues 1–89 (MAENLKGCSV…LKCVRILKQF (89 aa)) form an interaction with SIRT1 region. The region spanning 43-101 (FEVEYLCDYKKIREQEYYLVKWRGYPDSESTWEPRQNLKCVRILKQFHKDLERELLRRH) is the Chromo domain. In terms of domain architecture, Pre-SET spans 179–240 (VGCECQDCLW…DCPNRVVQKG (62 aa)). Zn(2+) contacts are provided by cysteine 181, cysteine 183, cysteine 186, cysteine 194, cysteine 195, cysteine 222, cysteine 226, cysteine 228, and cysteine 232. Positions 243–366 (YDLCIFRTDD…AGEELTFDYN (124 aa)) constitute an SET domain. Position 254–256 (254–256 (RGW)) interacts with S-adenosyl-L-methionine. A mediates interaction with MECOM region spans residues 255 to 377 (GWGVRTLEKI…QVDPVDMEST (123 aa)). Lysine 266 bears the N6-acetyllysine mark. S-adenosyl-L-methionine contacts are provided by residues tyrosine 297 and 323 to 324 (NH). Cysteine 326 lines the Zn(2+) pocket. Residue serine 391 is modified to Phosphoserine. The region spanning 396-412 (VRIECKCGTESCRKYLF) is the Post-SET domain. Positions 400, 402, and 407 each coordinate Zn(2+).

It belongs to the class V-like SAM-binding methyltransferase superfamily. Histone-lysine methyltransferase family. Suvar3-9 subfamily. In terms of assembly, interacts with H3 and H4 histones. Interacts with GFI1B, DNMT3B, CBX1, CBX4, CCAR2, MBD1, RUNX1, RUNX3, MYOD1, SMAD5 and RB1. Interacts with SBF1 through the SET domain. Interacts with HDAC1 and HDAC2 through the N-terminus and associates with the core histone deacetylase complex composed of HDAC1, HDAC2, RBBP4 and RBBP7. Component of the eNoSC complex, composed of SIRT1, SUV39H1 and RRP8. Interacts (via SET domain) with MECOM; enhances MECOM transcriptional repression activity. Interacts with LMNA; the interaction increases stability of SUV39H1. The large PER complex involved in the histone methylation is composed of at least PER2, CBX3, TRIM28, SUV39H1 and/or SUV39H2; CBX3 mediates the formation of the complex. As to quaternary structure, (Microbial infection) Interacts with HTLV-1 Tax protein, leading to abrogate Tax transactivation of HTLV-1 LTR. In terms of processing, phosphorylated on serine residues, and to a lesser degree, on threonine residues. The phosphorylated form is stabilized by SBF1 and is less active in its transcriptional repressor function. Post-translationally, ubiquitinated by the DCX(DCAF13) E3 ubiquitin ligase complex, leading to its degradation. Acetylated at Lys-266, leading to inhibition of enzyme activity. SIRT1-mediated deacetylation relieves this inhibition. In terms of processing, (Microbial infection) A higher molecular weight form is also seen in M.bovis infected cells.

It localises to the nucleus. The protein localises to the nucleus lamina. The protein resides in the nucleoplasm. It is found in the chromosome. Its subcellular location is the centromere. It localises to the cytoplasmic vesicle. The protein localises to the phagosome lumen. The protein resides in the cell membrane. It carries out the reaction L-lysyl(9)-[histone H3] + 3 S-adenosyl-L-methionine = N(6),N(6),N(6)-trimethyl-L-lysyl(9)-[histone H3] + 3 S-adenosyl-L-homocysteine + 3 H(+). Inhibited by S-adenosyl-L-homocysteine. Negatively regulated by CCAR2. Functionally, histone methyltransferase that specifically trimethylates 'Lys-9' of histone H3 using monomethylated H3 'Lys-9' as substrate. Also weakly methylates histone H1 (in vitro). H3 'Lys-9' trimethylation represents a specific tag for epigenetic transcriptional repression by recruiting HP1 (CBX1, CBX3 and/or CBX5) proteins to methylated histones. Mainly functions in heterochromatin regions, thereby playing a central role in the establishment of constitutive heterochromatin at pericentric and telomere regions. H3 'Lys-9' trimethylation is also required to direct DNA methylation at pericentric repeats. SUV39H1 is targeted to histone H3 via its interaction with RB1 and is involved in many processes, such as repression of MYOD1-stimulated differentiation, regulation of the control switch for exiting the cell cycle and entering differentiation, repression by the PML-RARA fusion protein, BMP-induced repression, repression of switch recombination to IgA and regulation of telomere length. Component of the eNoSC (energy-dependent nucleolar silencing) complex, a complex that mediates silencing of rDNA in response to intracellular energy status and acts by recruiting histone-modifying enzymes. The eNoSC complex is able to sense the energy status of cell: upon glucose starvation, elevation of NAD(+)/NADP(+) ratio activates SIRT1, leading to histone H3 deacetylation followed by dimethylation of H3 at 'Lys-9' (H3K9me2) by SUV39H1 and the formation of silent chromatin in the rDNA locus. Recruited by the large PER complex to the E-box elements of the circadian target genes such as PER2 itself or PER1, contributes to the conversion of local chromatin to a heterochromatin-like repressive state through H3 'Lys-9' trimethylation. (Microbial infection) Plays a role in defense against mycobacterial infections. Methylates M.tuberculosis HupB on 'Lys-140', probably methylates HupB of M.bovis also. Methylation has an inhibitory effect on mycobacterial growth in the host. Macrophages expressing about 60% SUV39H1 are slightly more susceptible to M.bovis or M.tuberculosis infection. Chaetocin (an inhibitor of this enzyme) increases macrophage survival of M.tuberculosis. This protein inhibits biofilm formation by M.tuberculosis via 'Lys-140' trimethylation. This chain is Histone-lysine N-methyltransferase SUV39H1 (SUV39H1), found in Homo sapiens (Human).